The primary structure comprises 1393 residues: Major capsid protein (1393 aa).

The protein belongs to the herpesviridae major capsid protein family. In terms of assembly, homomultimer. Makes the hexons and eleven out of twelve pentons. Interacts with triplex proteins 1/TRX1 and 2/TRX2; adjacent capsomers are linked together in groups of three by triplexes, heterotrimeric complexes composed of one molecule of TRX1 and two molecules of TRX2. Interacts with scaffold protein; this interaction allows efficient MCP transport to the host nucleus. Interacts with capsid vertex component 2/CVC2. Interacts with the small capsomere-interacting protein/SCP.

It is found in the virion. The protein resides in the host nucleus. Its function is as follows. Self-assembles to form an icosahedral capsid with a T=16 symmetry, about 200 nm in diameter, and consisting of 150 hexons and 12 pentons (total of 162 capsomers). Hexons form the edges and faces of the capsid and are each composed of six MCP molecules. In contrast, one penton is found at each of the 12 vertices. Eleven of the pentons are MCP pentamers, while the last vertex is occupied by the portal complex. The capsid is surrounded by a layer of proteinaceous material designated the tegument which, in turn, is enclosed in an envelope of host cell-derived lipids containing virus-encoded glycoproteins. The polypeptide is Major capsid protein (Gallus gallus (Chicken)).